Here is a 258-residue protein sequence, read N- to C-terminus: C1q-related factor (258 aa).

The N-terminal stretch at 1-16 is a signal peptide; that stretch reads MLLVLVVLIPVLVSSG. The segment at 39-120 is disordered; sequence GPGAGARSDG…PGSGGSGAIS (82 aa). Positions 67 to 77 are enriched in low complexity; that stretch reads GPQGKPGRTGK. A Collagen-like domain is found at 67 to 115; sequence GPQGKPGRTGKPGPPGPPGDRGPPGPVGPPGEKGEPGKPGPPGLPGSGG. A compositionally biased stretch (pro residues) spans 78 to 95; the sequence is PGPPGPPGDRGPPGPVGP. The C1q domain maps to 125–258; the sequence is TTVPRVAFYA…TFSGFIIYSD (134 aa).

Interacts with ADGRB3. Forms heterooligomers with C1QL4, when proteins are coexpressed; this interaction does not occur after secretion. Expressed in brainstem. More abundant in areas of the nervous system involved in motor function, such as the Purkinje cells of the cerebellum, the accessory olivary nucleus, the pons and the red nucleus.

It is found in the secreted. Functionally, may regulate the number of excitatory synapses that are formed on hippocampus neurons. Has no effect on inhibitory synapses. This Mus musculus (Mouse) protein is C1q-related factor (C1ql1).